The chain runs to 362 residues: NAC domain-containing protein 5 (362 aa).

In terms of domain architecture, NAC spans 3–151 (NPVGFRFRPT…TYTLCKVKFK (149 aa)). The DNA-binding element occupies 107–157 (IGEKRVLVFKNHGGSKSDWAMHEYHATFSSPNQIMTYTLCKVKFKGERREF). Positions 240–266 (DDRNNHTPQKPLTGVFSDHSTDGSDSD) are disordered.

It localises to the nucleus. The sequence is that of NAC domain-containing protein 5 (NAC005) from Arabidopsis thaliana (Mouse-ear cress).